Consider the following 303-residue polypeptide: GTPase Era (303 aa).

The Era-type G domain occupies 8 to 176 (YCGFIAIVGR…ASIVRKHMPE (169 aa)). A G1 region spans residues 16–23 (GRPNVGKS). 16–23 (GRPNVGKS) provides a ligand contact to GTP. A G2 region spans residues 42-46 (QTTRH). The G3 stretch occupies residues 63–66 (DTPG). GTP is bound by residues 63–67 (DTPGL) and 125–128 (NKVD). The G4 stretch occupies residues 125–128 (NKVD). The tract at residues 155–157 (ISA) is G5. The KH type-2 domain maps to 207–284 (LGEELPYSVT…HLELWVKVKS (78 aa)).

This sequence belongs to the TRAFAC class TrmE-Era-EngA-EngB-Septin-like GTPase superfamily. Era GTPase family. In terms of assembly, monomer.

The protein localises to the cytoplasm. The protein resides in the cell inner membrane. Its function is as follows. An essential GTPase that binds both GDP and GTP, with rapid nucleotide exchange. Plays a role in 16S rRNA processing and 30S ribosomal subunit biogenesis and possibly also in cell cycle regulation and energy metabolism. The protein is GTPase Era of Yersinia enterocolitica serotype O:8 / biotype 1B (strain NCTC 13174 / 8081).